The following is a 153-amino-acid chain: MGKISSLPTQLFKCCFCDFLKVKMHIMSPSHLFYLGLCLLTFTSSATAGPETLCGAELVDALQFVCGDRGFYFNKPTGYGSSSRRAPQTGIVDECCFRSCDLRRLEMYCAPLKPAKSARSVRAQRHTDMPKAQKEVHLKNASRGSAGNKNYRM.

The tract at residues Gly49–Thr77 is b. 3 disulfides stabilise this stretch: Cys54-Cys96, Cys66-Cys109, and Cys95-Cys100. The c stretch occupies residues Gly78–Thr89. The tract at residues Gly90–Ala110 is a. Positions Pro111–Ala118 are d. The propeptide at Arg119–Met153 is e peptide. The segment at Ser120–Met153 is disordered. Residues Arg125–Leu138 show a composition bias toward basic and acidic residues. Positions Ser142–Met153 are enriched in polar residues.

It belongs to the insulin family. As to quaternary structure, forms a ternary complex with IGFR1 and ITGAV:ITGB3. Forms a ternary complex with IGFR1 and ITGA6:ITGB4. Forms a ternary complex with IGFBP3 and ALS.

It localises to the secreted. The insulin-like growth factors, isolated from plasma, are structurally and functionally related to insulin but have a much higher growth-promoting activity. May be a physiological regulator of [1-14C]-2-deoxy-D-glucose (2DG) transport and glycogen synthesis in osteoblasts. Stimulates glucose transport in bone-derived osteoblastic (PyMS) cells and is effective at much lower concentrations than insulin, not only regarding glycogen and DNA synthesis but also with regard to enhancing glucose uptake. May play a role in synapse maturation. Ca(2+)-dependent exocytosis of IGF1 is required for sensory perception of smell in the olfactory bulb. Acts as a ligand for IGF1R. Binds to the alpha subunit of IGF1R, leading to the activation of the intrinsic tyrosine kinase activity which autophosphorylates tyrosine residues in the beta subunit thus initiating a cascade of down-stream signaling events leading to activation of the PI3K-AKT/PKB and the Ras-MAPK pathways. Binds to integrins ITGAV:ITGB3 and ITGA6:ITGB4. Its binding to integrins and subsequent ternary complex formation with integrins and IGFR1 are essential for IGF1 signaling. Induces the phosphorylation and activation of IGFR1, MAPK3/ERK1, MAPK1/ERK2 and AKT1. As part of the MAPK/ERK signaling pathway, acts as a negative regulator of apoptosis in cardiomyocytes via promotion of STUB1/CHIP-mediated ubiquitination and degradation of ICER-type isoforms of CREM. The chain is Insulin-like growth factor 1 from Panthera tigris altaica (Siberian tiger).